The primary structure comprises 138 residues: Actophorin (138 aa).

Ser-2 carries the blocked amino end (Ser) modification. In terms of domain architecture, ADF-H spans 3-134 (GIAVSDDCVQ…SEDAVSERAK (132 aa)).

The protein belongs to the actin-binding proteins ADF family. Monomer.

It localises to the cytoplasm. Forms a one to one complex with monomeric actin. Can regulate the pool available for polymerization. Severs actin filaments in a dose-dependent manner. The protein is Actophorin of Acanthamoeba castellanii (Amoeba).